The chain runs to 101 residues: Apolipoprotein C-II (101 aa).

A signal peptide spans 1–22 (MGTRFLLALFLVLLVLGFEVQG). The tract at residues 66–74 (TVDEKLRDM) is lipid binding. Residues 78–101 (STAAMSTYAGILTDQVLSMLKGEE) form a lipoprotein lipase cofactor region.

It belongs to the apolipoprotein C2 family. Proapolipoprotein C-II is synthesized as a sialic acid containing glycoprotein which is subsequently desialylated prior to its proteolytic processing. Post-translationally, proapolipoprotein C-II, the major form found in plasma undergoes proteolytic cleavage of its N-terminal hexapeptide to generate apolipoprotein C-II, which occurs as the minor form in plasma.

It is found in the secreted. In terms of biological role, component of chylomicrons, very low-density lipoproteins (VLDL), low-density lipoproteins (LDL), and high-density lipoproteins (HDL) in plasma. Plays an important role in lipoprotein metabolism as an activator of lipoprotein lipase. Both proapolipoprotein C-II and apolipoprotein C-II can activate lipoprotein lipase. In Plecturocebus moloch (Dusky titi monkey), this protein is Apolipoprotein C-II (APOC2).